The primary structure comprises 55 residues: Large ribosomal subunit protein bL33 (55 aa).

It belongs to the bacterial ribosomal protein bL33 family.

The chain is Large ribosomal subunit protein bL33 from Clavibacter sepedonicus (Clavibacter michiganensis subsp. sepedonicus).